Consider the following 171-residue polypeptide: MEDFYVEDYLVKGDRYYTKEHEWVRVKNGFAEVGITDYAQKQLGDIVYVDLPEKGKEVDAGDTLANIESVKNVAPVYAPVTGTVVEVNEDLKDEPGIINDDPYEAGWIAVIEMKDPTEVEDLMTAQDYAEYLKEIVEEEKEEEVEVKEEELIETESIEELSEEELGYEENK.

The region spanning 30-112 is the Lipoyl-binding domain; it reads FAEVGITDYA…YEAGWIAVIE (83 aa). K71 carries the N6-lipoyllysine modification. Residues 139–171 form a disordered region; it reads EKEEEVEVKEEELIETESIEELSEEELGYEENK.

Belongs to the GcvH family. In terms of assembly, the glycine cleavage system is composed of four proteins: P, T, L and H. It depends on (R)-lipoate as a cofactor.

The glycine cleavage system catalyzes the degradation of glycine. The H protein shuttles the methylamine group of glycine from the P protein to the T protein. This is Glycine cleavage system H protein 4 from Aquifex aeolicus (strain VF5).